Reading from the N-terminus, the 566-residue chain is Zinc finger protein 704 (566 aa).

Disordered regions lie at residues methionine 1–alanine 148, aspartate 166–glutamate 203, and proline 253–aspartate 324. Residues leucine 12–glycine 31 are compositionally biased toward low complexity. A compositionally biased stretch (pro residues) spans leucine 32 to glycine 55. Over residues threonine 56–leucine 72 the composition is skewed to low complexity. Basic and acidic residues predominate over residues arginine 91–alanine 100. A compositionally biased stretch (acidic residues) spans glutamate 101 to glutamate 128. Positions glutamate 186 to glutamate 203 are enriched in basic and acidic residues. Positions serine 267–serine 290 are enriched in low complexity. Residues phenylalanine 346–histidine 371 form a C2H2-type zinc finger. Serine 378 and serine 381 each carry phosphoserine. Disordered stretches follow at residues valine 409–threonine 436 and proline 497–glutamate 535. The interval glycine 471–aspartate 566 is sufficient for binding to RE2 sequence motifs. Residues lysine 537–lysine 541 carry the CR1 motif. A CR2 motif is present at residues cysteine 555 to lysine 559.

It localises to the nucleus. Functionally, transcription factor which binds to RE2 sequence elements in the MYOD1 enhancer. The polypeptide is Zinc finger protein 704 (Mus musculus (Mouse)).